The primary structure comprises 186 residues: Probable nicotinate-nucleotide adenylyltransferase (186 aa).

It belongs to the NadD family.

It catalyses the reaction nicotinate beta-D-ribonucleotide + ATP + H(+) = deamido-NAD(+) + diphosphate. It participates in cofactor biosynthesis; NAD(+) biosynthesis; deamido-NAD(+) from nicotinate D-ribonucleotide: step 1/1. Its function is as follows. Catalyzes the reversible adenylation of nicotinate mononucleotide (NaMN) to nicotinic acid adenine dinucleotide (NaAD). In Thermus thermophilus (strain ATCC BAA-163 / DSM 7039 / HB27), this protein is Probable nicotinate-nucleotide adenylyltransferase.